The primary structure comprises 473 residues: Probable lipid II flippase MurJ (473 aa).

The next 13 helical transmembrane spans lie at T31 to L51, L90 to F110, L125 to V145, F153 to G173, W177 to G197, F215 to V235, L253 to L273, I300 to T320, S327 to L347, P360 to F380, M382 to L402, I414 to S434, and L439 to L459.

It belongs to the MurJ/MviN family.

The protein localises to the cell inner membrane. It functions in the pathway cell wall biogenesis; peptidoglycan biosynthesis. Its function is as follows. Involved in peptidoglycan biosynthesis. Transports lipid-linked peptidoglycan precursors from the inner to the outer leaflet of the cytoplasmic membrane. The protein is Probable lipid II flippase MurJ of Thermotoga maritima (strain ATCC 43589 / DSM 3109 / JCM 10099 / NBRC 100826 / MSB8).